Here is a 288-residue protein sequence, read N- to C-terminus: Diaminopimelate epimerase (288 aa).

Substrate-binding residues include Asn13, Gln46, and Asn66. The active-site Proton donor is the Cys75. Substrate is bound by residues Gly76–Asn77, Asn166, Asn199, and Glu217–Arg218. The active-site Proton acceptor is Cys226. A substrate-binding site is contributed by Gly227 to Thr228.

This sequence belongs to the diaminopimelate epimerase family. As to quaternary structure, homodimer.

The protein localises to the cytoplasm. The catalysed reaction is (2S,6S)-2,6-diaminopimelate = meso-2,6-diaminopimelate. It functions in the pathway amino-acid biosynthesis; L-lysine biosynthesis via DAP pathway; DL-2,6-diaminopimelate from LL-2,6-diaminopimelate: step 1/1. Functionally, catalyzes the stereoinversion of LL-2,6-diaminopimelate (L,L-DAP) to meso-diaminopimelate (meso-DAP), a precursor of L-lysine and an essential component of the bacterial peptidoglycan. This is Diaminopimelate epimerase from Cupriavidus pinatubonensis (strain JMP 134 / LMG 1197) (Cupriavidus necator (strain JMP 134)).